Consider the following 257-residue polypeptide: Beta-fibrinogenase mucrofibrase-3 (257 aa).

The signal sequence occupies residues 1–18 (MVLIRVLANLLILQLSYA). Residues 19–24 (QKSSEL) constitute a propeptide that is removed on maturation. The 224-residue stretch at 25–248 (VIGGDECNIN…HLDWIKGIIA (224 aa)) folds into the Peptidase S1 domain. 6 disulfides stabilise this stretch: Cys31-Cys162, Cys49-Cys65, Cys97-Cys255, Cys141-Cys209, Cys173-Cys188, and Cys199-Cys224. Residues His64 and Asp109 each act as charge relay system in the active site. Ser203 (charge relay system) is an active-site residue.

The protein belongs to the peptidase S1 family. Snake venom subfamily. Monomer. In terms of tissue distribution, expressed by the venom gland.

The protein localises to the secreted. Snake venom serine protease with fibrinogenolytic activities. Cleaves beta-chain of fibrinogen (FGB) efficiently and shows relatively lower activity on alpha-chain. In Protobothrops mucrosquamatus (Taiwan habu), this protein is Beta-fibrinogenase mucrofibrase-3.